A 358-amino-acid polypeptide reads, in one-letter code: 4-hydroxy-3-methylbut-2-en-1-yl diphosphate synthase (flavodoxin) (358 aa).

[4Fe-4S] cluster-binding residues include Cys-265, Cys-268, Cys-300, and Glu-307.

This sequence belongs to the IspG family. Requires [4Fe-4S] cluster as cofactor.

It catalyses the reaction (2E)-4-hydroxy-3-methylbut-2-enyl diphosphate + oxidized [flavodoxin] + H2O + 2 H(+) = 2-C-methyl-D-erythritol 2,4-cyclic diphosphate + reduced [flavodoxin]. It functions in the pathway isoprenoid biosynthesis; isopentenyl diphosphate biosynthesis via DXP pathway; isopentenyl diphosphate from 1-deoxy-D-xylulose 5-phosphate: step 5/6. Its function is as follows. Converts 2C-methyl-D-erythritol 2,4-cyclodiphosphate (ME-2,4cPP) into 1-hydroxy-2-methyl-2-(E)-butenyl 4-diphosphate. The chain is 4-hydroxy-3-methylbut-2-en-1-yl diphosphate synthase (flavodoxin) from Maridesulfovibrio salexigens (strain ATCC 14822 / DSM 2638 / NCIMB 8403 / VKM B-1763) (Desulfovibrio salexigens).